Consider the following 309-residue polypeptide: tRNA-cytidine(32) 2-sulfurtransferase (309 aa).

A PP-loop motif motif is present at residues 57-62; it reads SGGKDS. 3 residues coordinate [4Fe-4S] cluster: Cys132, Cys135, and Cys223.

This sequence belongs to the TtcA family. Homodimer. It depends on Mg(2+) as a cofactor. [4Fe-4S] cluster is required as a cofactor.

The protein localises to the cytoplasm. The enzyme catalyses cytidine(32) in tRNA + S-sulfanyl-L-cysteinyl-[cysteine desulfurase] + AH2 + ATP = 2-thiocytidine(32) in tRNA + L-cysteinyl-[cysteine desulfurase] + A + AMP + diphosphate + H(+). Its pathway is tRNA modification. In terms of biological role, catalyzes the ATP-dependent 2-thiolation of cytidine in position 32 of tRNA, to form 2-thiocytidine (s(2)C32). The sulfur atoms are provided by the cysteine/cysteine desulfurase (IscS) system. This chain is tRNA-cytidine(32) 2-sulfurtransferase, found in Variovorax paradoxus (strain S110).